The sequence spans 365 residues: Chorismate synthase (365 aa).

Residues R48 and R54 each contribute to the NADP(+) site. Residues 125–127, 238–239, G278, 293–297, and R319 contribute to the FMN site; these read RSS, NA, and KPTSS.

This sequence belongs to the chorismate synthase family. In terms of assembly, homotetramer. It depends on FMNH2 as a cofactor.

It carries out the reaction 5-O-(1-carboxyvinyl)-3-phosphoshikimate = chorismate + phosphate. It participates in metabolic intermediate biosynthesis; chorismate biosynthesis; chorismate from D-erythrose 4-phosphate and phosphoenolpyruvate: step 7/7. In terms of biological role, catalyzes the anti-1,4-elimination of the C-3 phosphate and the C-6 proR hydrogen from 5-enolpyruvylshikimate-3-phosphate (EPSP) to yield chorismate, which is the branch point compound that serves as the starting substrate for the three terminal pathways of aromatic amino acid biosynthesis. This reaction introduces a second double bond into the aromatic ring system. The polypeptide is Chorismate synthase (Alteromonas mediterranea (strain DSM 17117 / CIP 110805 / LMG 28347 / Deep ecotype)).